Here is a 238-residue protein sequence, read N- to C-terminus: Nuclear transcription factor Y subunit B-9 (238 aa).

Residues 64–70 (MPIANVI) mediate DNA binding. The interval 91 to 102 (IQECVSEYISFV) is subunit association domain (SAD). The interval 203–238 (RYYQNGSSGQDESSVGGGSSSSINGMPAFDHYGQYK) is disordered. Positions 208–227 (GSSGQDESSVGGGSSSSING) are enriched in low complexity.

The protein belongs to the NFYB/HAP3 subunit family. In terms of assembly, heterotrimeric transcription factor composed of three components, NF-YA, NF-YB and NF-YC. NF-YB and NF-YC must interact and dimerize for NF-YA association and DNA binding. Interacts with PRN1. Expressed in green siliques. Present in etiolated seedlings.

The protein localises to the nucleus. Functionally, component of the NF-Y/HAP transcription factor complex. The NF-Y complex stimulates the transcription of various genes by recognizing and binding to a CCAAT motif in promoters. Acts as a central regulator of the embryogenesis. Required for the speciation of cotyledon identity and the completion of embryo maturation. Controls seed storage protein genes through the regulation of FUS3 and ABI3. Involved in the blue light (BL) and abscisic acid (ABA) signaling pathways. This is Nuclear transcription factor Y subunit B-9 (NFYB9) from Arabidopsis thaliana (Mouse-ear cress).